A 145-amino-acid chain; its full sequence is Maximins 5/H4 type 2 (145 aa).

The first 18 residues, 1 to 18 (MNFKYIVAVSFLIASAYA), serve as a signal peptide directing secretion. Propeptides lie at residues 19–43 (RSVQ…REIR) and 74–124 (TAEE…KEKR). The residue at position 144 (Leu144) is a Leucine amide.

This sequence belongs to the bombinin family. As to expression, expressed by the skin glands.

It localises to the secreted. Maximin-5 shows antibacterial activity against both Gram-positive and Gram-negative bacteria. The only exception is the resistance of E.coli. Also shows antimicrobial activity against fungi C.albicans, A.flavus and P.uticale. It has little hemolytic activity. It does not possess a significant cytotoxicity against tumor cell lines. It does not possess a significant anti-HIV activity. In terms of biological role, maximin-H4 shows antibacterial activity against both Gram-positive and Gram-negative bacteria. It also shows antimicrobial activity against the fungus C.albicans. Shows strong hemolytic activity. This chain is Maximins 5/H4 type 2, found in Bombina maxima (Giant fire-bellied toad).